The primary structure comprises 109 residues: Oncomodulin-1 (109 aa).

N-acetylserine is present on Ser2. 2 EF-hand domains span residues 39–74 (MSANQVKDVFRFIDNDQSGYLDEEELKFFLQKFESG) and 78–109 (LTESETKSLMAAADNDGDGKIGAEEFQEMVHS). Asp52, Asp54, Ser56, Tyr58, Glu63, Asp91, Asp93, Asp95, Lys97, and Glu102 together coordinate Ca(2+).

It belongs to the parvalbumin family.

Functionally, has some calmodulin-like activity with respect to enzyme activation and growth regulation. Binds two calcium ions. This chain is Oncomodulin-1 (OCM), found in Homo sapiens (Human).